A 254-amino-acid polypeptide reads, in one-letter code: 5-oxoprolinase subunit A (254 aa).

It belongs to the LamB/PxpA family. Forms a complex composed of PxpA, PxpB and PxpC.

The enzyme catalyses 5-oxo-L-proline + ATP + 2 H2O = L-glutamate + ADP + phosphate + H(+). Catalyzes the cleavage of 5-oxoproline to form L-glutamate coupled to the hydrolysis of ATP to ADP and inorganic phosphate. This Acinetobacter baumannii (strain ATCC 17978 / DSM 105126 / CIP 53.77 / LMG 1025 / NCDC KC755 / 5377) protein is 5-oxoprolinase subunit A.